We begin with the raw amino-acid sequence, 105 residues long: TMEM14 protein homolog YJR085C (105 aa).

3 consecutive transmembrane segments (helical) span residues Ile-26–Leu-46, Gly-53–Met-73, and Phe-77–Tyr-97.

Belongs to the TMEM14 family.

Its subcellular location is the mitochondrion. The protein resides in the membrane. This chain is TMEM14 protein homolog YJR085C, found in Saccharomyces cerevisiae (strain ATCC 204508 / S288c) (Baker's yeast).